The sequence spans 326 residues: Vitamin B12 import system permease protein BtuC (326 aa).

Helical transmembrane passes span 15–35 (WLLSLSLLVLLATLLSLCAGE), 61–81 (LAVLLVGAALALSGAVMQALF), 88–108 (PGLLGVSNGAGVGLIAAVLLG), 112–132 (LPGWALGLCAIAGALIITLIL), 146–166 (LLAGVALGIICSALMTWAIYF), 184–204 (GGVDWQQSWLMIALIPVLIWI), 240–260 (GWMVGVSVAMAGAIGFIGLVI), 274–294 (VLLPGCALAGAIALLLADVVA), and 302–322 (ELPIGVVTATLGAPVFIWLLL).

Belongs to the binding-protein-dependent transport system permease family. FecCD subfamily. As to quaternary structure, the complex is composed of two ATP-binding proteins (BtuD), two transmembrane proteins (BtuC) and a solute-binding protein (BtuF).

It is found in the cell inner membrane. Its function is as follows. Part of the ABC transporter complex BtuCDF involved in vitamin B12 import. Involved in the translocation of the substrate across the membrane. The polypeptide is Vitamin B12 import system permease protein BtuC (Salmonella agona (strain SL483)).